The primary structure comprises 164 residues: Phosphopantetheine adenylyltransferase (164 aa).

Residue Thr10 coordinates substrate. ATP is bound by residues 10–11 and His18; that span reads TF. Positions 42, 74, and 88 each coordinate substrate. Residues 89 to 91, Glu99, and 124 to 130 contribute to the ATP site; these read GIR and NSFISST.

It belongs to the bacterial CoaD family. As to quaternary structure, homohexamer. Mg(2+) is required as a cofactor.

The protein resides in the cytoplasm. The enzyme catalyses (R)-4'-phosphopantetheine + ATP + H(+) = 3'-dephospho-CoA + diphosphate. Its pathway is cofactor biosynthesis; coenzyme A biosynthesis; CoA from (R)-pantothenate: step 4/5. In terms of biological role, reversibly transfers an adenylyl group from ATP to 4'-phosphopantetheine, yielding dephospho-CoA (dPCoA) and pyrophosphate. The polypeptide is Phosphopantetheine adenylyltransferase (Pseudoalteromonas translucida (strain TAC 125)).